A 451-amino-acid chain; its full sequence is MGKYFGTDGVRGVANVELTPELAYRLGRTGGYVLTKHESTRPKVLIGRDTRVSGQMLENALIAGLLSIGAEVMRLGVISTPGVAYLTKTMDATAGVMISASHNPVEDNGIKFFGSDGFKLDDATELEIEGLLDEAEDTLPRPSGKELGFVHDYYEGAQKYLHMLRQTSDEDFSGIHVAIDGAHGATSSLAPRLFGDLEAEVSTIGTTPNGLNINEGVGSTHPEHLADFVLEKGADVGLSFDGDGDRLIAIDENGKIVDGDKIMFICGKYLNEIGRLKDNTIVATVMSNLGFHKTVAEHGMTALQTAVGDRYVVEEMRKNNYTLGGEQSGHIIFMDYSTTGDGMLSGVQLLQIMKATGKKLSELAAEMPVFPQRLVNIRVSDKNGAMNGPAVQAIIAEVEAEMAGNGRILVRASGTEPLVRVMAEAPTQEACDMYVERIANVVRENYALQEN.

S101 serves as the catalytic Phosphoserine intermediate. Residues S101, D241, D243, and D245 each coordinate Mg(2+). A Phosphoserine modification is found at S101.

It belongs to the phosphohexose mutase family. The cofactor is Mg(2+). In terms of processing, activated by phosphorylation.

It carries out the reaction alpha-D-glucosamine 1-phosphate = D-glucosamine 6-phosphate. Functionally, catalyzes the conversion of glucosamine-6-phosphate to glucosamine-1-phosphate. The chain is Phosphoglucosamine mutase from Exiguobacterium sibiricum (strain DSM 17290 / CCUG 55495 / CIP 109462 / JCM 13490 / 255-15).